Reading from the N-terminus, the 425-residue chain is Dihydroorotase (425 aa).

The Zn(2+) site is built by His61 and His63. Residues 63–65 (HLR) and Asn95 contribute to the substrate site. Residues Asp153, His180, and His233 each coordinate Zn(2+). Asn279 is a substrate binding site. Asp306 contacts Zn(2+). Asp306 is a catalytic residue. His310 contributes to the substrate binding site.

This sequence belongs to the metallo-dependent hydrolases superfamily. DHOase family. Class I DHOase subfamily. Requires Zn(2+) as cofactor.

It catalyses the reaction (S)-dihydroorotate + H2O = N-carbamoyl-L-aspartate + H(+). Its pathway is pyrimidine metabolism; UMP biosynthesis via de novo pathway; (S)-dihydroorotate from bicarbonate: step 3/3. Catalyzes the reversible cyclization of carbamoyl aspartate to dihydroorotate. The chain is Dihydroorotase from Geobacter sp. (strain M21).